The sequence spans 559 residues: Leucine-rich repeat-containing protein 71 (559 aa).

Residues 1–18 (MSSEQSAPGASPRAPRPG) show a composition bias toward low complexity. Positions 1–56 (MSSEQSAPGASPRAPRPGTQKSSGAVTKKGERAAKEKPATVLPPVGEEEPKSPEEY) are disordered. A compositionally biased stretch (basic and acidic residues) spans 28-38 (KKGERAAKEKP). LRR repeat units lie at residues 172–193 (NLWKVGLTDKTLTTFIELLPLC), 196–216 (TLRKVSLEGNPLPEQSYHKLM), 221–241 (TIAHLSLRNNNIDDRGAQLLG), 253–266 (TLVSLNLGFNHIGD), and 281–302 (SLLWLSLAHNRIQDKGALKLAE). Composition is skewed to basic and acidic residues over residues 324–348 (KGTQERSRSPSSSRHGDSKTDREKS) and 380–391 (KSWELAKKEEKL). The segment at 324 to 427 (KGTQERSRSP…PEQKPSRAKG (104 aa)) is disordered.

The protein is Leucine-rich repeat-containing protein 71 (LRRC71) of Homo sapiens (Human).